The following is a 269-amino-acid chain: uncharacterized protein (269 aa).

This is an uncharacterized protein from Schizosaccharomyces pombe (strain 972 / ATCC 24843) (Fission yeast).